Here is a 121-residue protein sequence, read N- to C-terminus: Protein TusC (121 aa).

It belongs to the DsrF/TusC family. As to quaternary structure, heterohexamer, formed by a dimer of trimers. The hexameric TusBCD complex contains 2 copies each of TusB, TusC and TusD. The TusBCD complex interacts with TusE.

The protein resides in the cytoplasm. Its function is as follows. Part of a sulfur-relay system required for 2-thiolation of 5-methylaminomethyl-2-thiouridine (mnm(5)s(2)U) at tRNA wobble positions. This Yersinia pestis bv. Antiqua (strain Antiqua) protein is Protein TusC.